The sequence spans 159 residues: ATP synthase subunit b 2 (159 aa).

A helical membrane pass occupies residues 1–21 (MDATFWAFIALVIFVAIVVYM).

This sequence belongs to the ATPase B chain family. As to quaternary structure, F-type ATPases have 2 components, F(1) - the catalytic core - and F(0) - the membrane proton channel. F(1) has five subunits: alpha(3), beta(3), gamma(1), delta(1), epsilon(1). F(0) has three main subunits: a(1), b(2) and c(10-14). The alpha and beta chains form an alternating ring which encloses part of the gamma chain. F(1) is attached to F(0) by a central stalk formed by the gamma and epsilon chains, while a peripheral stalk is formed by the delta and b chains.

The protein resides in the cell inner membrane. Functionally, f(1)F(0) ATP synthase produces ATP from ADP in the presence of a proton or sodium gradient. F-type ATPases consist of two structural domains, F(1) containing the extramembraneous catalytic core and F(0) containing the membrane proton channel, linked together by a central stalk and a peripheral stalk. During catalysis, ATP synthesis in the catalytic domain of F(1) is coupled via a rotary mechanism of the central stalk subunits to proton translocation. Component of the F(0) channel, it forms part of the peripheral stalk, linking F(1) to F(0). The protein is ATP synthase subunit b 2 of Brucella suis (strain ATCC 23445 / NCTC 10510).